The following is a 340-amino-acid chain: tRNA N6-adenosine threonylcarbamoyltransferase (340 aa).

Fe cation is bound by residues histidine 111 and histidine 115. Residues 133–137 (VVSGG), aspartate 166, glycine 179, aspartate 183, and asparagine 272 each bind substrate. Aspartate 300 is a Fe cation binding site.

Belongs to the KAE1 / TsaD family. It depends on Fe(2+) as a cofactor.

It is found in the cytoplasm. It catalyses the reaction L-threonylcarbamoyladenylate + adenosine(37) in tRNA = N(6)-L-threonylcarbamoyladenosine(37) in tRNA + AMP + H(+). Functionally, required for the formation of a threonylcarbamoyl group on adenosine at position 37 (t(6)A37) in tRNAs that read codons beginning with adenine. Is involved in the transfer of the threonylcarbamoyl moiety of threonylcarbamoyl-AMP (TC-AMP) to the N6 group of A37, together with TsaE and TsaB. TsaD likely plays a direct catalytic role in this reaction. The polypeptide is tRNA N6-adenosine threonylcarbamoyltransferase (Geobacter sulfurreducens (strain ATCC 51573 / DSM 12127 / PCA)).